A 274-amino-acid chain; its full sequence is Cytochrome c oxidase subunit 3 (274 aa).

Helical transmembrane passes span 22–42 (PSPWPLGASVACLILTLGGVM), 47–67 (FAAGDIGLPLGLILVLASMLL), 93–113 (GVVLFIVSEILLFFSLFWAFF), 137–157 (PFEVPLLNTIILLTSGCTITV), 170–190 (TILYLILTILLAWMFLGLQWV), 208–228 (FFVATGFHGLHVMIGTIFLTV), and 248–268 (AAIWYWHVVDVIWLFLYVSVY).

Belongs to the cytochrome c oxidase subunit 3 family. As to quaternary structure, component of the cytochrome c oxidase (complex IV, CIV), a multisubunit enzyme composed of a catalytic core of 3 subunits and several supernumerary subunits. The complex exists as a monomer or a dimer and forms supercomplexes (SCs) in the inner mitochondrial membrane with ubiquinol-cytochrome c oxidoreductase (cytochrome b-c1 complex, complex III, CIII).

The protein resides in the mitochondrion inner membrane. The enzyme catalyses 4 Fe(II)-[cytochrome c] + O2 + 8 H(+)(in) = 4 Fe(III)-[cytochrome c] + 2 H2O + 4 H(+)(out). In terms of biological role, component of the cytochrome c oxidase, the last enzyme in the mitochondrial electron transport chain which drives oxidative phosphorylation. The respiratory chain contains 3 multisubunit complexes succinate dehydrogenase (complex II, CII), ubiquinol-cytochrome c oxidoreductase (cytochrome b-c1 complex, complex III, CIII) and cytochrome c oxidase (complex IV, CIV), that cooperate to transfer electrons derived from NADH and succinate to molecular oxygen, creating an electrochemical gradient over the inner membrane that drives transmembrane transport and the ATP synthase. Cytochrome c oxidase is the component of the respiratory chain that catalyzes the reduction of oxygen to water. Electrons originating from reduced cytochrome c in the intermembrane space (IMS) are transferred via the dinuclear copper A center (CU(A)) of subunit 2 and heme A of subunit 1 to the active site in subunit 1, a binuclear center (BNC) formed by heme A3 and copper B (CU(B)). The BNC reduces molecular oxygen to 2 water molecules using 4 electrons from cytochrome c in the IMS and 4 protons from the mitochondrial matrix. This Allomyces macrogynus protein is Cytochrome c oxidase subunit 3 (COX3).